The sequence spans 150 residues: MSKVILKIKRLPHAQDLPLPSYATPHSSGLDLRAAIEKPLKIKPFERVLIPTGLILEIPEGYEGQVRPRSGLAWKKGLTVLNAPGTIDADYRGEVKVILVNLGNEEVVIERGERIAQLVIAPVQRVEVVEVEEVSQTQRGEGGFGSTGTK.

Residues 69 to 71 (RSG), asparagine 82, 86 to 88 (TID), and lysine 96 each bind substrate.

Belongs to the dUTPase family. Mg(2+) serves as cofactor.

The catalysed reaction is dUTP + H2O = dUMP + diphosphate + H(+). The protein operates within pyrimidine metabolism; dUMP biosynthesis; dUMP from dCTP (dUTP route): step 2/2. Functionally, this enzyme is involved in nucleotide metabolism: it produces dUMP, the immediate precursor of thymidine nucleotides and it decreases the intracellular concentration of dUTP so that uracil cannot be incorporated into DNA. This Aquifex aeolicus (strain VF5) protein is Deoxyuridine 5'-triphosphate nucleotidohydrolase.